The sequence spans 271 residues: Putative phosphoenolpyruvate synthase regulatory protein (271 aa).

151–158 contributes to the ADP binding site; sequence GVSRSGKT.

It belongs to the pyruvate, phosphate/water dikinase regulatory protein family. PSRP subfamily.

It catalyses the reaction [pyruvate, water dikinase] + ADP = [pyruvate, water dikinase]-phosphate + AMP + H(+). It carries out the reaction [pyruvate, water dikinase]-phosphate + phosphate + H(+) = [pyruvate, water dikinase] + diphosphate. Its function is as follows. Bifunctional serine/threonine kinase and phosphorylase involved in the regulation of the phosphoenolpyruvate synthase (PEPS) by catalyzing its phosphorylation/dephosphorylation. The sequence is that of Putative phosphoenolpyruvate synthase regulatory protein from Burkholderia ambifaria (strain MC40-6).